Here is a 294-residue protein sequence, read N- to C-terminus: Putative lipid kinase SP_1045 (294 aa).

A DAGKc domain is found at 1-131 (MKKAMVIINP…IDIGKANDNY (131 aa)). Residues 9–13 (NPTSG), Thr40, 66–72 (GDGTVNE), and Thr93 each bind ATP. Asp212 and Tyr214 together coordinate Mg(2+). Asp269 (proton acceptor) is an active-site residue.

This sequence belongs to the diacylglycerol/lipid kinase family. The cofactor is Mg(2+).

Functionally, may catalyze the ATP-dependent phosphorylation of lipids other than diacylglycerol (DAG). In fact, is not able to exhibit diacylglycerol kinase activity in vitro. The polypeptide is Putative lipid kinase SP_1045 (Streptococcus pneumoniae serotype 4 (strain ATCC BAA-334 / TIGR4)).